Consider the following 600-residue polypeptide: Spastin (600 aa).

The disordered stretch occupies residues methionine 1–proline 39. Topologically, residues methionine 1–proline 53 are cytoplasmic. The segment covering threonine 15–threonine 33 has biased composition (low complexity). The helical intramembrane region spans leucine 54–tryptophan 74. Topologically, residues cysteine 75 to valine 600 are cytoplasmic. Positions tyrosine 110–leucine 185 constitute an MIT domain. The disordered stretch occupies residues glycine 213–arginine 294. Basic and acidic residues predominate over residues lysine 216–proline 228. A compositionally biased stretch (polar residues) spans proline 253–threonine 291. ATP is bound at residue glycine 366 to threonine 373.

The protein belongs to the AAA ATPase family. Spastin subfamily. Homohexamer. The homohexamer is stabilized by ATP-binding. The homohexamer may adopt a ring conformation through which microtubules pass prior to being severed. Interacts with microtubules.

Its subcellular location is the membrane. The protein localises to the cytoplasm. The protein resides in the cytoskeleton. It is found in the microtubule organizing center. It localises to the centrosome. Its subcellular location is the perinuclear region. The protein localises to the nucleus. It catalyses the reaction n ATP + n H2O + a microtubule = n ADP + n phosphate + (n+1) alpha/beta tubulin heterodimers.. Its function is as follows. ATP-dependent microtubule severing protein that specifically recognizes and cuts microtubules that are polyglutamylated. Preferentially recognizes and acts on microtubules decorated with short polyglutamate tails: severing activity increases as the number of glutamates per tubulin rises from one to eight, but decreases beyond this glutamylation threshold. Microtubule severing promotes reorganization of cellular microtubule arrays and the release of microtubules from the centrosome following nucleation. Required for membrane traffic from the endoplasmic reticulum (ER) to the Golgi and for completion of the abscission stage of cytokinesis. Also plays a role in axon growth and the formation of axonal branches. This Xenopus laevis (African clawed frog) protein is Spastin.